Reading from the N-terminus, the 394-residue chain is Protein TsgA homolog (394 aa).

12 helical membrane-spanning segments follow: residues 11–31 (WISF…GMVM), 51–71 (FLNT…EIIP), 76–96 (LVFG…GHNL), 101–121 (ACMF…TFLI), 134–154 (LLFT…IAAT), 160–180 (VAWY…FILT), 206–226 (IGVL…LGFI), 246–266 (GLVS…SVAL), 274–294 (IVTV…SSQQ), 297–317 (MLSM…TTLI), 334–354 (FILT…GPIV), and 363–383 (LATA…LGFV).

This sequence belongs to the major facilitator superfamily. TsgA family.

It localises to the cell inner membrane. This chain is Protein TsgA homolog, found in Edwardsiella ictaluri (strain 93-146).